Reading from the N-terminus, the 203-residue chain is Small ribosomal subunit protein uS4 (203 aa).

The S4 RNA-binding domain occupies 93 to 173 (RRFDNVVFRS…IPSWIQVDKA (81 aa)).

The protein belongs to the universal ribosomal protein uS4 family. As to quaternary structure, part of the 30S ribosomal subunit. Contacts protein S5. The interaction surface between S4 and S5 is involved in control of translational fidelity.

Functionally, one of the primary rRNA binding proteins, it binds directly to 16S rRNA where it nucleates assembly of the body of the 30S subunit. In terms of biological role, with S5 and S12 plays an important role in translational accuracy. This chain is Small ribosomal subunit protein uS4, found in Chlorobium phaeobacteroides (strain DSM 266 / SMG 266 / 2430).